A 348-amino-acid polypeptide reads, in one-letter code: Calcium-gated potassium channel TvoK (348 aa).

Helical transmembrane passes span 19–39, 52–72, and 80–100; these read LTKV…LEFL, YFTA…GDVV, and VVAM…TATI. The RCK N-terminal domain maps to 120–246; sequence KNHTIICNWN…VSAGATEVLS (127 aa). One can recognise an RCK C-terminal domain in the interval 266–348; that stretch reads DFILKSLSET…KKEVEEAIKG (83 aa).

As to quaternary structure, heterooctamer composed of four full-length subunits and four soluble RCK domains.

Its subcellular location is the cell membrane. Functionally, calcium-gated potassium channel. Can also be activated by Mg(2+), Mn(2+) and Ni(2+). This Thermoplasma volcanium (strain ATCC 51530 / DSM 4299 / JCM 9571 / NBRC 15438 / GSS1) protein is Calcium-gated potassium channel TvoK.